The following is a 349-amino-acid chain: GTP 3',8-cyclase (349 aa).

In terms of domain architecture, Radical SAM core spans 24-249 (PFGRAVTYLR…KDMSYRTGGP (226 aa)). Residue arginine 33 participates in GTP binding. 2 residues coordinate [4Fe-4S] cluster: cysteine 40 and cysteine 44. Tyrosine 46 contributes to the S-adenosyl-L-methionine binding site. A [4Fe-4S] cluster-binding site is contributed by cysteine 47. Arginine 82 provides a ligand contact to GTP. Glycine 86 lines the S-adenosyl-L-methionine pocket. Threonine 116 is a binding site for GTP. Serine 140 lines the S-adenosyl-L-methionine pocket. Residue lysine 176 coordinates GTP. Methionine 210 serves as a coordination point for S-adenosyl-L-methionine. The [4Fe-4S] cluster site is built by cysteine 273 and cysteine 276. GTP is bound at residue 278-280 (RVR). Cysteine 290 lines the [4Fe-4S] cluster pocket.

It belongs to the radical SAM superfamily. MoaA family. In terms of assembly, monomer and homodimer. Requires [4Fe-4S] cluster as cofactor.

It catalyses the reaction GTP + AH2 + S-adenosyl-L-methionine = (8S)-3',8-cyclo-7,8-dihydroguanosine 5'-triphosphate + 5'-deoxyadenosine + L-methionine + A + H(+). The protein operates within cofactor biosynthesis; molybdopterin biosynthesis. Functionally, catalyzes the cyclization of GTP to (8S)-3',8-cyclo-7,8-dihydroguanosine 5'-triphosphate. This Sinorhizobium medicae (strain WSM419) (Ensifer medicae) protein is GTP 3',8-cyclase.